Here is a 599-residue protein sequence, read N- to C-terminus: uncharacterized protein (599 aa).

Residue 49–56 (GPPGSGKT) coordinates ATP. A Macro domain is found at 416–599 (AEVRKELEYK…TKIFEEKFSV (184 aa)).

This sequence in the N-terminal section; belongs to the AAA ATPase family. RarA/MGS1/WRNIP1 subfamily.

This is an uncharacterized protein from Thermotoga maritima (strain ATCC 43589 / DSM 3109 / JCM 10099 / NBRC 100826 / MSB8).